Here is a 710-residue protein sequence, read N- to C-terminus: Adenylosuccinate synthetase (710 aa).

Disordered regions lie at residues 1–57 (MPVR…NHAK) and 82–112 (MDDE…SAQC). The span at 11–25 (NNSSSGVSNALSSSS) shows a compositional bias: low complexity. Residues 32–43 (SPSSRENSTPLS) show a composition bias toward polar residues. Residues 180-186 (GDEGKGK) and 210-212 (GHT) each bind GTP. The Proton acceptor role is filled by Asp-181. Mg(2+) contacts are provided by Asp-181 and Gly-210. Residues 181 to 184 (DEGK), 208 to 211 (NAGH), Thr-295, Lys-309, Gln-421, Thr-437, and Lys-567 each bind IMP. Residue His-211 is the Proton donor of the active site. 563–569 (AVTKKPR) is a binding site for substrate. GTP contacts are provided by residues Arg-569 and 697 to 699 (GNG).

The protein belongs to the adenylosuccinate synthetase family. Homodimer. Mg(2+) serves as cofactor.

It localises to the cytoplasm. The enzyme catalyses IMP + L-aspartate + GTP = N(6)-(1,2-dicarboxyethyl)-AMP + GDP + phosphate + 2 H(+). It participates in purine metabolism; AMP biosynthesis via de novo pathway; AMP from IMP: step 1/2. In terms of biological role, plays an important role in the salvage pathway for purine nucleotide biosynthesis. Catalyzes the first committed step in the biosynthesis of AMP from IMP. This Leishmania braziliensis protein is Adenylosuccinate synthetase.